The following is a 144-amino-acid chain: Large ribosomal subunit protein uL11 (144 aa).

The protein belongs to the universal ribosomal protein uL11 family. Part of the ribosomal stalk of the 50S ribosomal subunit. Interacts with L10 and the large rRNA to form the base of the stalk. L10 forms an elongated spine to which L12 dimers bind in a sequential fashion forming a multimeric L10(L12)X complex. One or more lysine residues are methylated.

In terms of biological role, forms part of the ribosomal stalk which helps the ribosome interact with GTP-bound translation factors. The sequence is that of Large ribosomal subunit protein uL11 from Polaromonas sp. (strain JS666 / ATCC BAA-500).